The following is a 1290-amino-acid chain: Alpha-amylase (1290 aa).

Positions 1–31 (MTRKTRYLHQITTLILGGLLIVPAAAPPVSA) are cleaved as a signal peptide. The active-site Nucleophile is glutamate 231. The active-site Proton donor is aspartate 373. The region spanning 817 to 902 (VPANLQATVM…AAATATTPAG (86 aa)) is the Fibronectin type-III domain. The CBM25 stretch occupies residues 902-978 (GNHVTVYYKQ…SNGGSNYLFG (77 aa)). Composition is skewed to low complexity over residues 994–1008 (APVA…APTA) and 1016–1031 (VTPT…VAPT). Residues 994-1037 (APVAPSATPTVAPTATPTPKPSVTPTVTPITTPTVAPTLSPTPT) are disordered. A CBM25 region spans residues 1092-1171 (GNSATIYYKN…NGGSNYHFGT (80 aa)). The 107-residue stretch at 1183–1289 (TGEPQADSVT…VTLTVQRWKD (107 aa)) folds into the CBM20 domain.

The protein belongs to the glycosyl hydrolase 119 (GH119) family.

It localises to the secreted. The catalysed reaction is Endohydrolysis of (1-&gt;4)-alpha-D-glucosidic linkages in polysaccharides containing three or more (1-&gt;4)-alpha-linked D-glucose units.. Acts on maltooligosaccharides that have a degree of polymerization (DP) of 4 or more, amylose, and soluble or raw starch to produce glucose and maltooligosaccharides up to DP5 by a hydrolysis reaction. Also acts on maltooligosyl trehaloses that have DP5 or more to produce trehalose as the major hydrolysis product. This Niallia circulans (Bacillus circulans) protein is Alpha-amylase.